Reading from the N-terminus, the 156-residue chain is 6,7-dimethyl-8-ribityllumazine synthase (156 aa).

Residues phenylalanine 22, 57–59, and 81–83 each bind 5-amino-6-(D-ribitylamino)uracil; these read AYE and SVI. 86-87 contributes to the (2S)-2-hydroxy-3-oxobutyl phosphate binding site; it reads GT. Catalysis depends on histidine 89, which acts as the Proton donor. Residue phenylalanine 114 participates in 5-amino-6-(D-ribitylamino)uracil binding. (2S)-2-hydroxy-3-oxobutyl phosphate is bound at residue arginine 128.

It belongs to the DMRL synthase family. As to quaternary structure, forms an icosahedral capsid composed of 60 subunits, arranged as a dodecamer of pentamers.

The enzyme catalyses (2S)-2-hydroxy-3-oxobutyl phosphate + 5-amino-6-(D-ribitylamino)uracil = 6,7-dimethyl-8-(1-D-ribityl)lumazine + phosphate + 2 H2O + H(+). Its pathway is cofactor biosynthesis; riboflavin biosynthesis; riboflavin from 2-hydroxy-3-oxobutyl phosphate and 5-amino-6-(D-ribitylamino)uracil: step 1/2. Functionally, catalyzes the formation of 6,7-dimethyl-8-ribityllumazine by condensation of 5-amino-6-(D-ribitylamino)uracil with 3,4-dihydroxy-2-butanone 4-phosphate. This is the penultimate step in the biosynthesis of riboflavin. This is 6,7-dimethyl-8-ribityllumazine synthase from Photobacterium leiognathi.